A 262-amino-acid chain; its full sequence is Adenosylcobinamide-GDP ribazoletransferase (262 aa).

The next 6 helical transmembrane spans lie at 11–31 (LNLF…SWVI), 43–63 (YFGL…WFTQ), 66–86 (LPTS…TGGF), 121–141 (AIVL…LALF), 146–166 (AITG…SLIF), and 199–219 (IFVL…SLWA).

It belongs to the CobS family. The cofactor is Mg(2+).

Its subcellular location is the cell inner membrane. The enzyme catalyses alpha-ribazole + adenosylcob(III)inamide-GDP = adenosylcob(III)alamin + GMP + H(+). It catalyses the reaction alpha-ribazole 5'-phosphate + adenosylcob(III)inamide-GDP = adenosylcob(III)alamin 5'-phosphate + GMP + H(+). Its pathway is cofactor biosynthesis; adenosylcobalamin biosynthesis; adenosylcobalamin from cob(II)yrinate a,c-diamide: step 7/7. Joins adenosylcobinamide-GDP and alpha-ribazole to generate adenosylcobalamin (Ado-cobalamin). Also synthesizes adenosylcobalamin 5'-phosphate from adenosylcobinamide-GDP and alpha-ribazole 5'-phosphate. This Shewanella denitrificans (strain OS217 / ATCC BAA-1090 / DSM 15013) protein is Adenosylcobinamide-GDP ribazoletransferase.